A 946-amino-acid chain; its full sequence is Glycine dehydrogenase (decarboxylating) (946 aa).

K700 bears the N6-(pyridoxal phosphate)lysine mark.

This sequence belongs to the GcvP family. The glycine cleavage system is composed of four proteins: P, T, L and H. Pyridoxal 5'-phosphate serves as cofactor.

It carries out the reaction N(6)-[(R)-lipoyl]-L-lysyl-[glycine-cleavage complex H protein] + glycine + H(+) = N(6)-[(R)-S(8)-aminomethyldihydrolipoyl]-L-lysyl-[glycine-cleavage complex H protein] + CO2. In terms of biological role, the glycine cleavage system catalyzes the degradation of glycine. The P protein binds the alpha-amino group of glycine through its pyridoxal phosphate cofactor; CO(2) is released and the remaining methylamine moiety is then transferred to the lipoamide cofactor of the H protein. This chain is Glycine dehydrogenase (decarboxylating), found in Pseudomonas fluorescens (strain SBW25).